We begin with the raw amino-acid sequence, 101 residues long: Small ribosomal subunit protein uS14 (101 aa).

This sequence belongs to the universal ribosomal protein uS14 family. In terms of assembly, part of the 30S ribosomal subunit. Contacts proteins S3 and S10.

Its function is as follows. Binds 16S rRNA, required for the assembly of 30S particles and may also be responsible for determining the conformation of the 16S rRNA at the A site. The protein is Small ribosomal subunit protein uS14 of Shewanella piezotolerans (strain WP3 / JCM 13877).